A 429-amino-acid chain; its full sequence is Methylenetetrahydrofolate--tRNA-(uracil-5-)-methyltransferase TrmFO (429 aa).

7–12 (GAGLAG) contributes to the FAD binding site.

The protein belongs to the MnmG family. TrmFO subfamily. It depends on FAD as a cofactor.

Its subcellular location is the cytoplasm. It catalyses the reaction uridine(54) in tRNA + (6R)-5,10-methylene-5,6,7,8-tetrahydrofolate + NADH + H(+) = 5-methyluridine(54) in tRNA + (6S)-5,6,7,8-tetrahydrofolate + NAD(+). It carries out the reaction uridine(54) in tRNA + (6R)-5,10-methylene-5,6,7,8-tetrahydrofolate + NADPH + H(+) = 5-methyluridine(54) in tRNA + (6S)-5,6,7,8-tetrahydrofolate + NADP(+). Its function is as follows. Catalyzes the folate-dependent formation of 5-methyl-uridine at position 54 (M-5-U54) in all tRNAs. This is Methylenetetrahydrofolate--tRNA-(uracil-5-)-methyltransferase TrmFO from Thermosipho melanesiensis (strain DSM 12029 / CIP 104789 / BI429).